The primary structure comprises 117 residues: Large ribosomal subunit protein bL19 (117 aa).

This sequence belongs to the bacterial ribosomal protein bL19 family.

Functionally, this protein is located at the 30S-50S ribosomal subunit interface and may play a role in the structure and function of the aminoacyl-tRNA binding site. The sequence is that of Large ribosomal subunit protein bL19 from Christiangramia forsetii (strain DSM 17595 / CGMCC 1.15422 / KT0803) (Gramella forsetii).